Reading from the N-terminus, the 1010-residue chain is Protein translocase subunit SecA (1010 aa).

ATP contacts are provided by residues glutamine 86, 104–108 (GEGKT), and aspartate 535. Low complexity predominate over residues 893–904 (QAGAADGNAKGA). A disordered region spans residues 893–916 (QAGAADGNAKGARTVRHSVRLPGR). Residues cysteine 920, cysteine 922, cysteine 931, and histidine 932 each coordinate Zn(2+). The span at 950–981 (QHAAVAADTPAQPAPQATATRPPTSQVPRGRA) shows a compositional bias: low complexity. Positions 950-1010 (QHAAVAADTP…RGKGASARKK (61 aa)) are disordered.

This sequence belongs to the SecA family. As to quaternary structure, monomer and homodimer. Part of the essential Sec protein translocation apparatus which comprises SecA, SecYEG and auxiliary proteins SecDF. Other proteins may also be involved. Zn(2+) is required as a cofactor.

It is found in the cell membrane. The protein resides in the cytoplasm. The catalysed reaction is ATP + H2O + cellular proteinSide 1 = ADP + phosphate + cellular proteinSide 2.. In terms of biological role, part of the Sec protein translocase complex. Interacts with the SecYEG preprotein conducting channel. Has a central role in coupling the hydrolysis of ATP to the transfer of proteins into and across the cell membrane, serving as an ATP-driven molecular motor driving the stepwise translocation of polypeptide chains across the membrane. This is Protein translocase subunit SecA from Roseiflexus sp. (strain RS-1).